The following is a 325-amino-acid chain: Coiled-coil domain-containing protein 160 (325 aa).

Disordered stretches follow at residues 18 to 45 (SAQD…KGME) and 81 to 123 (ENKR…CSTD). Positions 81-91 (ENKRNISKNET) are enriched in basic and acidic residues. A compositionally biased stretch (polar residues) spans 92–123 (DTNSASYESSNVDVTTEESFNSTEDNSTCSTD). Residues 144 to 288 (KLCLNLLNEE…SVIKNELRTE (145 aa)) are a coiled coil.

It belongs to the CCDC160 family.

In Homo sapiens (Human), this protein is Coiled-coil domain-containing protein 160 (CCDC160).